We begin with the raw amino-acid sequence, 1048 residues long: B3 domain-containing protein Os02g0598200 (1048 aa).

The tract at residues 1 to 345 (MDGAVRGQGC…QKERVASSDN (345 aa)) is disordered. A compositionally biased stretch (basic residues) spans 16–25 (SFNKTKKKNR). Composition is skewed to basic and acidic residues over residues 26–134 (NCSD…SDDM), 151–162 (KKNSRNDADEEK), 169–214 (CSDD…GDKK), 243–253 (KNMKSDGDSYK), 281–295 (AKER…MEMK), and 332–345 (LKRE…SSDN). Residues 375–468 (AFAFFKFVRD…TFSVRVFGID (94 aa)) constitute a DNA-binding region (TF-B3 1). Residues 505–528 (QYQDSEDIHDGPNVSGESPRSKEP) are disordered. The segment at residues 953–1048 (LQFCIPSTIQ…LAFQVYITRK (96 aa)) is a DNA-binding region (TF-B3 2).

The protein localises to the nucleus. This chain is B3 domain-containing protein Os02g0598200, found in Oryza sativa subsp. japonica (Rice).